A 172-amino-acid polypeptide reads, in one-letter code: 6,7-dimethyl-8-ribityllumazine synthase (172 aa).

5-amino-6-(D-ribitylamino)uracil-binding positions include Phe24, 58–60 (ALE), and 82–84 (AVI). Residue 87–88 (ET) coordinates (2S)-2-hydroxy-3-oxobutyl phosphate. His90 functions as the Proton donor in the catalytic mechanism. Position 115 (Asn115) interacts with 5-amino-6-(D-ribitylamino)uracil. (2S)-2-hydroxy-3-oxobutyl phosphate is bound at residue Arg129. The interval 150–172 (ALDQLGDDDEDEEEDEDDEEERA) is disordered. Over residues 154 to 172 (LGDDDEDEEEDEDDEEERA) the composition is skewed to acidic residues.

It belongs to the DMRL synthase family.

It carries out the reaction (2S)-2-hydroxy-3-oxobutyl phosphate + 5-amino-6-(D-ribitylamino)uracil = 6,7-dimethyl-8-(1-D-ribityl)lumazine + phosphate + 2 H2O + H(+). It participates in cofactor biosynthesis; riboflavin biosynthesis; riboflavin from 2-hydroxy-3-oxobutyl phosphate and 5-amino-6-(D-ribitylamino)uracil: step 1/2. Its function is as follows. Catalyzes the formation of 6,7-dimethyl-8-ribityllumazine by condensation of 5-amino-6-(D-ribitylamino)uracil with 3,4-dihydroxy-2-butanone 4-phosphate. This is the penultimate step in the biosynthesis of riboflavin. This Burkholderia multivorans (strain ATCC 17616 / 249) protein is 6,7-dimethyl-8-ribityllumazine synthase.